Here is a 256-residue protein sequence, read N- to C-terminus: Glucosamine-6-phosphate deaminase (256 aa).

Asp68 acts as the Proton acceptor; for enolization step in catalysis. Asn137 serves as the catalytic For ring-opening step. His139 (proton acceptor; for ring-opening step) is an active-site residue. The active-site For ring-opening step is the Glu144.

This sequence belongs to the glucosamine/galactosamine-6-phosphate isomerase family. NagB subfamily.

It carries out the reaction alpha-D-glucosamine 6-phosphate + H2O = beta-D-fructose 6-phosphate + NH4(+). It participates in amino-sugar metabolism; N-acetylneuraminate degradation; D-fructose 6-phosphate from N-acetylneuraminate: step 5/5. Functionally, catalyzes the reversible isomerization-deamination of glucosamine 6-phosphate (GlcN6P) to form fructose 6-phosphate (Fru6P) and ammonium ion. In Mycoplasmopsis pulmonis (strain UAB CTIP) (Mycoplasma pulmonis), this protein is Glucosamine-6-phosphate deaminase.